Reading from the N-terminus, the 399-residue chain is Serine/threonine-protein kinase PknL (399 aa).

The Cytoplasmic segment spans residues 1 to 368 (MVEAGTRDPL…FIWARQHARR (368 aa)). The Protein kinase domain occupies 19–278 (YLVQAKIASG…IAMGADLEAI (260 aa)). Residues 25 to 33 (IASGGTSTV) and Lys48 contribute to the ATP site. A Phosphothreonine; by autocatalysis modification is found at Thr32. The residue at position 62 (Thr62) is a Phosphothreonine; by autocatalysis. Asp142 serves as the catalytic Proton acceptor. Phosphothreonine; by autocatalysis is present on residues Thr173, Thr175, and Thr323. A disordered region spans residues 312–346 (GQLGAKPVHHPTRQLTRQPGDCSEPASGSEPEHEP). A helical transmembrane segment spans residues 369-389 (MVLVWVSVVLAITGLVASAAW). Topologically, residues 390–399 (TIGSNLSGLL) are extracellular.

Belongs to the protein kinase superfamily. Ser/Thr protein kinase family. Post-translationally, autophosphorylated. Thr-173 is required for autophosphorylation and transphosphorylation activities. Thr-175 is not necessary for autophosphorylation activity, but is required for full kinase activity.

The protein localises to the cell membrane. The enzyme catalyses L-seryl-[protein] + ATP = O-phospho-L-seryl-[protein] + ADP + H(+). It carries out the reaction L-threonyl-[protein] + ATP = O-phospho-L-threonyl-[protein] + ADP + H(+). Functionally, phosphorylates the DNA-binding protein MT2231. May be involved in the regulation of cell division and cell envelope biosynthesis. This chain is Serine/threonine-protein kinase PknL (pknL), found in Mycobacterium tuberculosis (strain CDC 1551 / Oshkosh).